Consider the following 370-residue polypeptide: Peptide chain release factor 1 (370 aa).

Position 239 is an N5-methylglutamine (glutamine 239).

This sequence belongs to the prokaryotic/mitochondrial release factor family. Methylated by PrmC. Methylation increases the termination efficiency of RF1.

The protein resides in the cytoplasm. In terms of biological role, peptide chain release factor 1 directs the termination of translation in response to the peptide chain termination codons UAG and UAA. The polypeptide is Peptide chain release factor 1 (Bacteroides fragilis (strain ATCC 25285 / DSM 2151 / CCUG 4856 / JCM 11019 / LMG 10263 / NCTC 9343 / Onslow / VPI 2553 / EN-2)).